We begin with the raw amino-acid sequence, 322 residues long: Outer membrane protein assembly factor BamC (322 aa).

The first 22 residues, 1–22 (MISLLAVAVLAGCSNPETRSQA), serve as a signal peptide directing secretion.

The protein belongs to the BamC family. In terms of assembly, part of the Bam complex.

It localises to the cell outer membrane. Part of the outer membrane protein assembly complex, which is involved in assembly and insertion of beta-barrel proteins into the outer membrane. The polypeptide is Outer membrane protein assembly factor BamC (Oceanimonas sp. (strain GK1 / IBRC-M 10197)).